Reading from the N-terminus, the 526-residue chain is Na(+)/H(+) antiporter NhaB (526 aa).

Transmembrane regions (helical) follow at residues 13–33 (FLGQSPDWYKLAILVFLVVNP), 98–118 (LLLIFMVAGIYFMKQLLLFVF), 133–155 (LAFCFAAALLSAFLDALTVVAVV), 208–228 (LLMHAGVGTALGGVMTMVGEP), 244–264 (FFLRMAPVTLPVFACGLLVCL), 309–329 (ALIGIWLVVALAFHLAEVGLI), 355–375 (EALPFTALLTVFFTVVAVIIE), 395–415 (LALFYLFNGLLSSVSDNVFVG), 452–472 (VATPNGQAAFLFLLTSALAPL), and 481–501 (VWMALPYTVVLTLVGLLCVQF).

This sequence belongs to the NhaB Na(+)/H(+) (TC 2.A.34) antiporter family.

The protein localises to the cell inner membrane. It carries out the reaction 2 Na(+)(in) + 3 H(+)(out) = 2 Na(+)(out) + 3 H(+)(in). Na(+)/H(+) antiporter that extrudes sodium in exchange for external protons. This is Na(+)/H(+) antiporter NhaB from Serratia proteamaculans (strain 568).